The following is a 466-amino-acid chain: Delta-1 crystallin (466 aa).

The residue at position 2 (A2) is a Blocked amino end (Ala).

It belongs to the lyase 1 family. Argininosuccinate lyase subfamily. Homotetramer. The N-terminus is blocked. In terms of tissue distribution, eye lens.

In terms of biological role, delta crystallin, the principal crystallin in embryonic lens, is found only in birds and reptiles. In Gallus gallus (Chicken), this protein is Delta-1 crystallin (ASL1).